Consider the following 373-residue polypeptide: 3-isopropylmalate dehydrogenase (373 aa).

82–93 (GPKWGTGTVRPE) is a binding site for NAD(+). Residues arginine 100, arginine 110, arginine 139, and aspartate 231 each contribute to the substrate site. Aspartate 231, aspartate 256, and aspartate 260 together coordinate Mg(2+). NAD(+) is bound at residue 295–306 (GSAPDLPANKVN).

This sequence belongs to the isocitrate and isopropylmalate dehydrogenases family. Homodimer. Requires Mg(2+) as cofactor. The cofactor is Mn(2+).

The protein resides in the cytoplasm. The catalysed reaction is (2R,3S)-3-isopropylmalate + NAD(+) = 4-methyl-2-oxopentanoate + CO2 + NADH. It participates in amino-acid biosynthesis; L-leucine biosynthesis; L-leucine from 3-methyl-2-oxobutanoate: step 3/4. In terms of biological role, catalyzes the oxidation of 3-carboxy-2-hydroxy-4-methylpentanoate (3-isopropylmalate) to 3-carboxy-4-methyl-2-oxopentanoate. The product decarboxylates to 4-methyl-2 oxopentanoate. The protein is 3-isopropylmalate dehydrogenase (LEU2) of Candida albicans (Yeast).